We begin with the raw amino-acid sequence, 197 residues long: Protein TIFY 9 (197 aa).

Residues 57–73 are compositionally biased toward polar residues; that stretch reads STGNNSDSSAKSRSVPS. Residues 57–84 form a disordered region; the sequence is STGNNSDSSAKSRSVPSTPREDQPQIPI. Residues 98 to 132 enclose the Tify domain; that stretch reads LVSGTVPMTIFYNGSVSVFQVSRNKAGEIMKVANE. The Jas signature appears at 168 to 193; it reads PIARRKSLQRFLEKRKERLVSTSPYY. The Nuclear localization signal motif lies at 170–177; sequence ARRKSLQR.

The protein belongs to the TIFY/JAZ family. Homo- and heterodimer. Interacts with MYC2, MYC3, MYC4, AFPH2/NINJA, TIFY10A/JAZ1, TIFY10B/JAZ2, TIFY6B/JAZ3, TIFY6A/JAZ4, TIFY11B/JAZ6, TIFY5A/JAZ8, TIFY7/JAZ9, TIFY3A/JAZ11 and TIFY3B/JAZ12. Isoform 1 and isoform 2 interact with COI1. Isoform 3 does not interact with COI1. Interacts with RHD6 and RSL1. Post-translationally, ubiquitinated. Targeted for degradation by the SCF(COI1) E3 ubiquitin ligase-proteasome pathway during jasmonate signaling.

The protein localises to the nucleus. Repressor of jasmonate (JA) responses that lacks the entire Jas domain and possesses severe JA insensitivity and resistance to JA-induced degradation. Acts as an endogenous repressor of JA signal output in JA-stimulated cells. Modulator of JA-controlled growth inhibition in response to wounding. In terms of biological role, repressor of jasmonate (JA) responses that lacks part of the Jas domain and possesses JA insensitivity and partial resistance to JA-induced degradation. Functionally, repressor of jasmonate (JA) responses. Interacts with and suppresses RHD6 and RSL1 transcription factor activities to negatively regulate jasmonate-stimulated root hair development. This Arabidopsis thaliana (Mouse-ear cress) protein is Protein TIFY 9 (TIFY9).